Consider the following 384-residue polypeptide: Glucose-fructose oxidoreductase domain-containing protein 2 (384 aa).

An N-terminal signal peptide occupies residues 1–25 (MKTLPGIGVFGTGNTARVLISLLRA). Residues 358–384 (GEWESVELTNDETDSNQNLSEVIQHNL) form a disordered region. The segment covering 372 to 384 (SNQNLSEVIQHNL) has biased composition (polar residues).

This sequence belongs to the Gfo/Idh/MocA family.

The protein localises to the secreted. It localises to the extracellular space. Its subcellular location is the extracellular matrix. Functionally, promotes matrix assembly. This chain is Glucose-fructose oxidoreductase domain-containing protein 2 (gfod2), found in Xenopus tropicalis (Western clawed frog).